The primary structure comprises 232 residues: MTNYREIAWQGLWKNNPGLVQLLGLCPLLAVTATLTNALGLGVATMLVLIGSNILVSLVRDYVPKEIRIPVFVMIIAALVTAVQLLINAYAYGLYLSLGIFLPLIVTNCIIIGRAEAFASRNNAFSAAFDGLMMGLGFTLVLAVLGATREILGQGTLFDGADQLLGPWAKALTIQVWQVDTPFLLAMLPPGAFIVMGLLIALKNVIDKKLKERQPEAAVQPSVTRARITKVS.

Helical transmembrane passes span 18–38, 39–59, 69–89, 93–113, 127–147, and 182–202; these read GLVQLLGLCPLLAVTATLTNA, LGLGVATMLVLIGSNILVSLV, IPVFVMIIAALVTAVQLLINA, GLYLSLGIFLPLIVTNCIIIG, AAFDGLMMGLGFTLVLAVLGA, and PFLLAMLPPGAFIVMGLLIAL.

Belongs to the NqrDE/RnfAE family. As to quaternary structure, the complex is composed of six subunits: RnfA, RnfB, RnfC, RnfD, RnfE and RnfG.

Its subcellular location is the cell inner membrane. Part of a membrane-bound complex that couples electron transfer with translocation of ions across the membrane. This chain is Ion-translocating oxidoreductase complex subunit E, found in Shewanella sp. (strain MR-4).